The sequence spans 315 residues: Methionyl-tRNA formyltransferase (315 aa).

109-112 (SLLP) is a binding site for (6S)-5,6,7,8-tetrahydrofolate.

Belongs to the Fmt family.

The catalysed reaction is L-methionyl-tRNA(fMet) + (6R)-10-formyltetrahydrofolate = N-formyl-L-methionyl-tRNA(fMet) + (6S)-5,6,7,8-tetrahydrofolate + H(+). Its function is as follows. Attaches a formyl group to the free amino group of methionyl-tRNA(fMet). The formyl group appears to play a dual role in the initiator identity of N-formylmethionyl-tRNA by promoting its recognition by IF2 and preventing the misappropriation of this tRNA by the elongation apparatus. This is Methionyl-tRNA formyltransferase from Lachnospira eligens (strain ATCC 27750 / DSM 3376 / VPI C15-48 / C15-B4) (Eubacterium eligens).